Consider the following 699-residue polypeptide: MINLNKHTAFKKTAKFFLGLSLLLSVIVPSFALQPATAEAADSYKIVGYYPSWAAYGRNYNVADIDPTKVTHINYAFADICWNGIHGNPDPSGPNPVTWTCQNEKSQTINVPNGTIVLGDPWIDTGKTFAGDTWDQPIAGNINQLNKLKQTNPNLKTIISVGGWTWSNRFSDVAATAATREVFANSAVDFLRKYNFDGVDLDWEYPVSGGLDGNSKRPEDKQNYTLLLSKIREKLDAAGAVDGKKYLLTIASGASATYAANTELAKIAAIVDWINIMTYDFNGAWQKISAHNAPLNYDPAASAAGVPDANTFNVAAGAQGHLDAGVPAAKLVLGVPFYGRGWDGCAQAGNGQYQTCTGGSSVGTWEAGSFDFYDLEANYINKNGYTRYWNDTAKVPYLYNASNKRFISYDDAESVGYKTAYIKSKGLGGAMFWELSGDRNKTLQNKLKADLPTGGTVPPVDTTAPSVPGNARSTGVTANSVTLAWNASTDNVGVTGYNVYNGANLATSVTGTTATISGLTAGTSYTFTIKAKDAAGNLSAASNAVTVSTTAQPGGDTQAPTAPTNLASTAQTTSSITLSWTASTDNVGVTGYDVYNGTALATTVTGTTATISGLAADTSYTFTVKAKDAAGNVSAASNAVSVKTAAETTNPGVSAWQVNTAYTAGQLVTYNGKTYKCLQPHTSLAGWEPSNVPALWQLQ.

A signal peptide spans 1–41; the sequence is MINLNKHTAFKKTAKFFLGLSLLLSVIVPSFALQPATAEAA. The region spanning 44 to 454 is the GH18 domain; that stretch reads YKIVGYYPSW…NKLKADLPTG (411 aa). Chitin contacts are provided by residues 135–136 and 162–165; these read DQ and GGWT. Glutamate 204 functions as the Proton donor in the catalytic mechanism. Residues tyrosine 205, 277 to 280, and tryptophan 433 contribute to the chitin site; that span reads MTYD. Residues 449 to 471 form a disordered region; it reads ADLPTGGTVPPVDTTAPSVPGNA. Residues 452–465 are compositionally biased toward low complexity; sequence PTGGTVPPVDTTAP. Fibronectin type-III domains follow at residues 467 to 553 and 562 to 647; these read VPGN…TAQP and APTN…TAAE.

Belongs to the glycosyl hydrolase 18 family. Chitinase class II subfamily.

It catalyses the reaction Random endo-hydrolysis of N-acetyl-beta-D-glucosaminide (1-&gt;4)-beta-linkages in chitin and chitodextrins.. This Niallia circulans (Bacillus circulans) protein is Chitinase A1 (chiA1).